Reading from the N-terminus, the 1145-residue chain is Protocadherin-19 (1145 aa).

Residues 1–21 form the signal peptide; that stretch reads MESLLLPVLLLLAVLWTQAAA. 6 Cadherin domains span residues 22–129, 130–238, 239–346, 350–453, 454–563, and 569–672; these read LINL…APSF, PAAQ…NPVF, GEST…PPII, SVNS…HPHF, SKPY…TPVI, and INGT…QESM. Residues 22–678 are Extracellular-facing; sequence LINLKYSVEE…QESMGSVNLS (657 aa). Positions 31, 32, 88, and 90 each coordinate Ca(2+). Cys-93 and Cys-99 are oxidised to a cystine. Ca(2+) is bound by residues Asp-121, Asn-123, Asp-124, Asn-125, Glu-140, Asp-155, Asp-157, Glu-199, Asp-212, Asp-230, Ser-231, Asn-232, Asp-233, Asn-234, and Glu-249. N-linked (GlcNAc...) asparagine glycosylation occurs at Asn-261. Asp-264, Asp-266, Asn-270, Asp-305, Glu-307, Asp-338, Asn-340, Asp-341, Asn-342, Glu-360, Asp-375, Asp-377, Asn-381, Asp-412, and Glu-414 together coordinate Ca(2+). The N-linked (GlcNAc...) asparagine glycan is linked to Asn-420. Asp-427, Asp-445, Glu-446, Asn-447, Asp-448, Asn-449, Glu-464, Asp-479, Asp-481, Asn-485, Asn-522, Glu-524, and Asp-537 together coordinate Ca(2+). An N-linked (GlcNAc...) asparagine glycan is attached at Asn-485. Asn-546 carries an N-linked (GlcNAc...) asparagine glycan. Residues Asp-555, Val-556, Asn-557, Asp-558, and Asn-559 each contribute to the Ca(2+) site. Asn-570 is a glycosylation site (N-linked (GlcNAc...) asparagine). The Ca(2+) site is built by Asp-594, Asp-596, Asn-600, and Asp-646. An N-linked (GlcNAc...) asparagine glycan is attached at Asn-676. Residues 679 to 699 traverse the membrane as a helical segment; the sequence is LIFIIALGSIAGILFVTMIFV. The Cytoplasmic portion of the chain corresponds to 700–1145; that stretch reads AIKCKRDNKE…SVKRLKDIVL (446 aa). 2 disordered regions span residues 901-921 and 1094-1145; these read GNSLKDSGHEESDQTDSEHDV and LEHH…DIVL. Composition is skewed to basic and acidic residues over residues 906–921 and 1106–1145; these read DSGHEESDQTDSEHDV and SEAEPRGADNEKVMHEVNPIRKDGRDKESPSVKRLKDIVL.

Homodimer; antiparallel.

The protein resides in the cell membrane. Its function is as follows. Calcium-dependent cell-adhesion protein. This is Protocadherin-19 (Pcdh19) from Mus musculus (Mouse).